A 1302-amino-acid polypeptide reads, in one-letter code: Multidrug resistance protein 1 (1302 aa).

A helical transmembrane segment spans residues 43–63; that stretch reads GVFEIILLIIGIIGSIGVGCL. In terms of domain architecture, ABC transmembrane type-1 1 spans 51-360; the sequence is IIGIIGSIGV…ISTPINILNS (310 aa). Asn-83 carries N-linked (GlcNAc...) asparagine glycosylation. The next 5 helical transmembrane spans lie at 118-138, 192-212, 213-233, 292-312, and 331-351; these read LYFAIGNMVAGFLQTICFFVL, LFQTFSSFITGYLIGFIKCWD, LTLVVLCMFPFIMVSMMGLGM, IGIGTGLGCMMFFIMSSNALG, and AGTVLTVFMSVLLATQSLSQI. The ABC transporter 1 domain maps to 395 to 634; sequence IRFEDVQFVY…KGTYYGLVKR (240 aa). 430–437 lines the ATP pocket; the sequence is GASGCGKS. Residue Asn-663 is glycosylated (N-linked (GlcNAc...) asparagine). The helical transmembrane segment at 712-732 threads the bilayer; it reads YIFCTLGLIGGIGAGAAFPFY. Residues 713 to 1022 form the ABC transmembrane type-1 2 domain; it reads IFCTLGLIGG…IGNVLPDVGK (310 aa). Asn-751 carries N-linked (GlcNAc...) asparagine glycosylation. A helical membrane pass occupies residues 765 to 785; sequence MIIICIGIITMISFFCYVGLF. A glycan (N-linked (GlcNAc...) asparagine) is linked at Asn-808. The next 2 helical transmembrane spans lie at 841–861 and 862–882; these read VGDIIEIMSTVGFGFGIGLYF and SWKLSLCILAVFPIISFFMFI. In terms of domain architecture, ABC transporter 2 spans 1057 to 1296; sequence IEFKNIHFRY…KGFYYTLAMQ (240 aa). 1092 to 1099 is a binding site for ATP; that stretch reads GASGCGKS.

It belongs to the ABC transporter superfamily. ABCB family. Multidrug resistance exporter (TC 3.A.1.201) subfamily.

It is found in the membrane. The catalysed reaction is ATP + H2O + xenobioticSide 1 = ADP + phosphate + xenobioticSide 2.. Energy-dependent efflux pump responsible for decreased drug accumulation in multidrug resistance parasites. The chain is Multidrug resistance protein 1 from Entamoeba histolytica (strain ATCC 30459 / HM-1:IMSS / ABRM).